Reading from the N-terminus, the 462-residue chain is NADH-quinone oxidoreductase subunit N 1 (462 aa).

A run of 15 helical transmembrane segments spans residues 4 to 24, 32 to 52, 60 to 80, 88 to 108, 113 to 133, 148 to 168, 178 to 198, 220 to 240, 251 to 271, 279 to 299, 307 to 327, 351 to 371, 374 to 394, 416 to 436, and 439 to 459; these read FVVA…VLCL, AGFY…WAVA, IACF…ALLA, FAGD…LLLA, WIML…LIAA, FLPG…IYAA, LAAP…GVGF, VAAF…LHVC, LWPA…LGAV, LLAY…MAVN, LFYL…VGAL, AGVL…AGFV, FLVF…FGII, LIAH…ALGV, and AGLV…AALF.

The protein belongs to the complex I subunit 2 family. NDH-1 is composed of 14 different subunits. Subunits NuoA, H, J, K, L, M, N constitute the membrane sector of the complex.

It localises to the cell inner membrane. It catalyses the reaction a quinone + NADH + 5 H(+)(in) = a quinol + NAD(+) + 4 H(+)(out). In terms of biological role, NDH-1 shuttles electrons from NADH, via FMN and iron-sulfur (Fe-S) centers, to quinones in the respiratory chain. The immediate electron acceptor for the enzyme in this species is believed to be ubiquinone. Couples the redox reaction to proton translocation (for every two electrons transferred, four hydrogen ions are translocated across the cytoplasmic membrane), and thus conserves the redox energy in a proton gradient. The chain is NADH-quinone oxidoreductase subunit N 1 from Solidesulfovibrio magneticus (strain ATCC 700980 / DSM 13731 / RS-1) (Desulfovibrio magneticus).